Here is a 358-residue protein sequence, read N- to C-terminus: Sulfate/thiosulfate import ATP-binding protein CysA (358 aa).

One can recognise an ABC transporter domain in the interval 3–237 (IKIENLEKHF…PQTPFVTQFV (235 aa)). ATP is bound at residue 35-42 (GPSGCGKT).

This sequence belongs to the ABC transporter superfamily. Sulfate/tungstate importer (TC 3.A.1.6) family. The complex is composed of two ATP-binding proteins (CysA), two transmembrane proteins (CysT and CysW) and a solute-binding protein (CysP).

The protein localises to the cell inner membrane. The enzyme catalyses sulfate(out) + ATP + H2O = sulfate(in) + ADP + phosphate + H(+). The catalysed reaction is thiosulfate(out) + ATP + H2O = thiosulfate(in) + ADP + phosphate + H(+). Its function is as follows. Part of the ABC transporter complex CysAWTP involved in sulfate/thiosulfate import. Responsible for energy coupling to the transport system. The chain is Sulfate/thiosulfate import ATP-binding protein CysA from Mannheimia succiniciproducens (strain KCTC 0769BP / MBEL55E).